Here is a 983-residue protein sequence, read N- to C-terminus: 3',5'-cyclic-AMP phosphodiesterase, isoforms N/G (983 aa).

4 disordered regions span residues 31–333, 349–370, 400–429, and 528–566; these read MPEG…SAGL, SDSD…ASES, VPAS…LSQG, and SAGQ…RLPT. Residues 35 to 50 are compositionally biased toward basic and acidic residues; that stretch reads GEDHRGDLNQKGENNN. The span at 51 to 60 shows a compositional bias: polar residues; that stretch reads RPRPSISLAN. Residues 84–97 are compositionally biased toward gly residues; that stretch reads SVGGGDSDGGGEAI. 2 stretches are compositionally biased toward low complexity: residues 112–121 and 145–167; these read LSTTTSNSSS and QLQQ…SQRS. Residues 174–199 show a composition bias toward acidic residues; the sequence is AEGEEFDVDPMDEDDEDQTYDRETEE. Composition is skewed to low complexity over residues 219–234 and 248–261; these read SSLF…TTSS and AASI…SDLM. Composition is skewed to polar residues over residues 268 to 287, 358 to 368, and 401 to 419; these read STAT…SQRR, KSMSRNSSIAS, and PASN…SRSG. The PDEase domain occupies 569-898; sequence VETPRENELG…DYYQSMIPPS (330 aa). Histidine 645 functions as the Proton donor in the catalytic mechanism. Position 645 to 649 (645 to 649) interacts with 3',5'-cyclic AMP; it reads HNSLH. Residues histidine 649, histidine 685, aspartate 686, and aspartate 803 each coordinate a divalent metal cation. Residues aspartate 686, aspartate 803, and glutamine 854 each coordinate 3',5'-cyclic AMP. Acidic residues predominate over residues 920-937; sequence EESDQENLAELEEGDESG. Positions 920–983 are disordered; that stretch reads EESDQENLAE…CQNQPQHGGM (64 aa). Low complexity predominate over residues 938 to 955; it reads GESTTTGTTGTTAASALS. Gly residues predominate over residues 956–967; sequence GAGGGGGGGGGM. Over residues 973–983 the composition is skewed to polar residues; sequence GCQNQPQHGGM.

This sequence belongs to the cyclic nucleotide phosphodiesterase family. PDE4 subfamily. In terms of assembly, monomer. The cofactor is a divalent metal cation.

It catalyses the reaction 3',5'-cyclic AMP + H2O = AMP + H(+). Its pathway is purine metabolism; 3',5'-cyclic AMP degradation; AMP from 3',5'-cyclic AMP: step 1/1. Hydrolyzes the second messenger cAMP, which is a key regulator of many important physiological processes. Vital for female fertility. Required for learning/memory. This chain is 3',5'-cyclic-AMP phosphodiesterase, isoforms N/G, found in Drosophila melanogaster (Fruit fly).